The following is a 95-amino-acid chain: Co-chaperonin GroES (95 aa).

The protein belongs to the GroES chaperonin family. Heptamer of 7 subunits arranged in a ring. Interacts with the chaperonin GroEL.

Its subcellular location is the cytoplasm. Together with the chaperonin GroEL, plays an essential role in assisting protein folding. The GroEL-GroES system forms a nano-cage that allows encapsulation of the non-native substrate proteins and provides a physical environment optimized to promote and accelerate protein folding. GroES binds to the apical surface of the GroEL ring, thereby capping the opening of the GroEL channel. This is Co-chaperonin GroES from Cereibacter sphaeroides (strain KD131 / KCTC 12085) (Rhodobacter sphaeroides).